A 754-amino-acid chain; its full sequence is 5-methyltetrahydropteroyltriglutamate--homocysteine methyltransferase (754 aa).

Residues 17 to 20 (RELK) and Lys-117 each bind 5-methyltetrahydropteroyltri-L-glutamate. L-homocysteine-binding positions include 431–433 (IGS) and Glu-484. L-methionine is bound by residues 431-433 (IGS) and Glu-484. Residues 515–516 (RC) and Trp-561 each bind 5-methyltetrahydropteroyltri-L-glutamate. An L-homocysteine-binding site is contributed by Asp-599. Asp-599 contributes to the L-methionine binding site. Glu-605 lines the 5-methyltetrahydropteroyltri-L-glutamate pocket. 3 residues coordinate Zn(2+): His-641, Cys-643, and Glu-665. The active-site Proton donor is His-694. Residue Cys-726 coordinates Zn(2+).

It belongs to the vitamin-B12 independent methionine synthase family. Zn(2+) is required as a cofactor.

It carries out the reaction 5-methyltetrahydropteroyltri-L-glutamate + L-homocysteine = tetrahydropteroyltri-L-glutamate + L-methionine. It participates in amino-acid biosynthesis; L-methionine biosynthesis via de novo pathway; L-methionine from L-homocysteine (MetE route): step 1/1. Its function is as follows. Catalyzes the transfer of a methyl group from 5-methyltetrahydrofolate to homocysteine resulting in methionine formation. The sequence is that of 5-methyltetrahydropteroyltriglutamate--homocysteine methyltransferase from Salmonella typhimurium (strain LT2 / SGSC1412 / ATCC 700720).